Here is a 116-residue protein sequence, read N- to C-terminus: Ribosome-binding factor A (116 aa).

Belongs to the RbfA family. Monomer. Binds 30S ribosomal subunits, but not 50S ribosomal subunits or 70S ribosomes.

It localises to the cytoplasm. One of several proteins that assist in the late maturation steps of the functional core of the 30S ribosomal subunit. Associates with free 30S ribosomal subunits (but not with 30S subunits that are part of 70S ribosomes or polysomes). Required for efficient processing of 16S rRNA. May interact with the 5'-terminal helix region of 16S rRNA. In Streptococcus pyogenes serotype M3 (strain SSI-1), this protein is Ribosome-binding factor A.